A 474-amino-acid polypeptide reads, in one-letter code: tRNA-2-methylthio-N(6)-dimethylallyladenosine synthase (474 aa).

An MTTase N-terminal domain is found at 3-120; that stretch reads KKLHIKTWGC…LPEMIEQVRR (118 aa). 6 residues coordinate [4Fe-4S] cluster: Cys-12, Cys-49, Cys-83, Cys-157, Cys-161, and Cys-164. Residues 143 to 375 form the Radical SAM core domain; that stretch reads RAEGPTAFVS…QDRITQQAMR (233 aa). In terms of domain architecture, TRAM spans 378–441; the sequence is RHMMGTVQRI…TNSLRGVFIR (64 aa).

It belongs to the methylthiotransferase family. MiaB subfamily. In terms of assembly, monomer. The cofactor is [4Fe-4S] cluster.

The protein resides in the cytoplasm. It catalyses the reaction N(6)-dimethylallyladenosine(37) in tRNA + (sulfur carrier)-SH + AH2 + 2 S-adenosyl-L-methionine = 2-methylsulfanyl-N(6)-dimethylallyladenosine(37) in tRNA + (sulfur carrier)-H + 5'-deoxyadenosine + L-methionine + A + S-adenosyl-L-homocysteine + 2 H(+). Catalyzes the methylthiolation of N6-(dimethylallyl)adenosine (i(6)A), leading to the formation of 2-methylthio-N6-(dimethylallyl)adenosine (ms(2)i(6)A) at position 37 in tRNAs that read codons beginning with uridine. In Shewanella baltica (strain OS155 / ATCC BAA-1091), this protein is tRNA-2-methylthio-N(6)-dimethylallyladenosine synthase.